The sequence spans 440 residues: Protein root UVB sensitive 3 (440 aa).

A run of 3 helical transmembrane segments spans residues 109-129 (IGAT…GILF), 154-174 (IGML…VVVC), and 232-252 (FTSG…VFHM).

The protein belongs to the RUS1 family.

The protein resides in the membrane. The sequence is that of Protein root UVB sensitive 3 from Arabidopsis thaliana (Mouse-ear cress).